Reading from the N-terminus, the 160-residue chain is 2-C-methyl-D-erythritol 2,4-cyclodiphosphate synthase (160 aa).

D10 and H12 together coordinate a divalent metal cation. 4-CDP-2-C-methyl-D-erythritol 2-phosphate contacts are provided by residues 10–12 and 36–37; these read DVH and HS. H44 serves as a coordination point for a divalent metal cation. Residues 58-60, 63-67, and R144 contribute to the 4-CDP-2-C-methyl-D-erythritol 2-phosphate site; these read DIG and FPDTD.

It belongs to the IspF family. Homotrimer. A divalent metal cation is required as a cofactor.

It carries out the reaction 4-CDP-2-C-methyl-D-erythritol 2-phosphate = 2-C-methyl-D-erythritol 2,4-cyclic diphosphate + CMP. The protein operates within isoprenoid biosynthesis; isopentenyl diphosphate biosynthesis via DXP pathway; isopentenyl diphosphate from 1-deoxy-D-xylulose 5-phosphate: step 4/6. Its function is as follows. Involved in the biosynthesis of isopentenyl diphosphate (IPP) and dimethylallyl diphosphate (DMAPP), two major building blocks of isoprenoid compounds. Catalyzes the conversion of 4-diphosphocytidyl-2-C-methyl-D-erythritol 2-phosphate (CDP-ME2P) to 2-C-methyl-D-erythritol 2,4-cyclodiphosphate (ME-CPP) with a corresponding release of cytidine 5-monophosphate (CMP). This chain is 2-C-methyl-D-erythritol 2,4-cyclodiphosphate synthase, found in Dechloromonas aromatica (strain RCB).